A 194-amino-acid polypeptide reads, in one-letter code: MSEWVEQRLQSLAKAFDQSYCGAIEAVVDLICQRFQAGNKLLICGNGGSAADAQHLAAEFVGRFHFNRQALPAIALTANSSILTSVSNDYTYDIVFSRQVEALGQPGDILWGLSTSGKSTNVLHALKCAKDKGLHTIGMAGNNGGLFQEFADYPLFVADKNTPCIQEVHLMTYHHICEQVESRLFAQKSVGIKV.

One can recognise an SIS domain in the interval 31-186 (ICQRFQAGNK…CEQVESRLFA (156 aa)). 46-48 (NGG) contacts substrate. Zn(2+)-binding residues include His-55 and Glu-59. Residues Glu-59, 88–89 (ND), 114–116 (STS), Ser-119, and Gln-166 each bind substrate. The Zn(2+) site is built by Gln-166 and His-174.

Belongs to the SIS family. GmhA subfamily. Requires Zn(2+) as cofactor.

It is found in the cytoplasm. The enzyme catalyses 2 D-sedoheptulose 7-phosphate = D-glycero-alpha-D-manno-heptose 7-phosphate + D-glycero-beta-D-manno-heptose 7-phosphate. It participates in carbohydrate biosynthesis; D-glycero-D-manno-heptose 7-phosphate biosynthesis; D-glycero-alpha-D-manno-heptose 7-phosphate and D-glycero-beta-D-manno-heptose 7-phosphate from sedoheptulose 7-phosphate: step 1/1. Its function is as follows. Catalyzes the isomerization of sedoheptulose 7-phosphate in D-glycero-D-manno-heptose 7-phosphate. The protein is Phosphoheptose isomerase of Synechocystis sp. (strain ATCC 27184 / PCC 6803 / Kazusa).